Consider the following 164-residue polypeptide: Ecotin (164 aa).

The signal sequence occupies residues 1 to 20 (MKMFVPAVVFAALASASAWA). A disulfide bridge connects residues Cys-72 and Cys-109.

It belongs to the protease inhibitor I11 (ecotin) family. As to quaternary structure, homodimer.

It is found in the periplasm. Functionally, general inhibitor of pancreatic serine proteases: inhibits chymotrypsin, trypsin, elastases, factor X, kallikrein as well as a variety of other proteases. This chain is Ecotin, found in Salmonella typhi.